A 594-amino-acid polypeptide reads, in one-letter code: Microtubule-associated protein VP8 (594 aa).

It is found in the virion. It localises to the host cytoplasm. The protein localises to the host cytoskeleton. Its function is as follows. Minor inner capsid component. Displays NTPase and RNA 5'-triphosphatase (RTPase) activities. May function as a cofactor of polymerase VP1. Associates with microtubules and plays a role in the formation, structural organization and morphology of viral inclusions, where the assembly of cores and the replication of viral RNA occur. The chain is Microtubule-associated protein VP8 (S8) from Saccharum officinarum (Sugarcane).